Consider the following 214-residue polypeptide: Octanoyltransferase (214 aa).

Positions 34–214 constitute a BPL/LPL catalytic domain; it reads GVQKELVWLL…KFNEIFSNFN (181 aa). Substrate contacts are provided by residues 73–80, 145–147, and 158–160; these read RGGKYTYH, AFG, and GVS. The Acyl-thioester intermediate role is filled by C176.

The protein belongs to the LipB family.

The protein resides in the cytoplasm. It carries out the reaction octanoyl-[ACP] + L-lysyl-[protein] = N(6)-octanoyl-L-lysyl-[protein] + holo-[ACP] + H(+). It functions in the pathway protein modification; protein lipoylation via endogenous pathway; protein N(6)-(lipoyl)lysine from octanoyl-[acyl-carrier-protein]: step 1/2. In terms of biological role, catalyzes the transfer of endogenously produced octanoic acid from octanoyl-acyl-carrier-protein onto the lipoyl domains of lipoate-dependent enzymes. Lipoyl-ACP can also act as a substrate although octanoyl-ACP is likely to be the physiological substrate. This is Octanoyltransferase from Ehrlichia chaffeensis (strain ATCC CRL-10679 / Arkansas).